Consider the following 319-residue polypeptide: Formimidoylglutamase (319 aa).

Mn(2+)-binding residues include histidine 131, aspartate 154, histidine 156, aspartate 158, cysteine 248, and aspartate 250.

Belongs to the arginase family. Requires Mn(2+) as cofactor.

The catalysed reaction is N-formimidoyl-L-glutamate + H2O = formamide + L-glutamate. Its pathway is amino-acid degradation; L-histidine degradation into L-glutamate; L-glutamate from N-formimidoyl-L-glutamate (hydrolase route): step 1/1. Its function is as follows. Catalyzes the conversion of N-formimidoyl-L-glutamate to L-glutamate and formamide. The sequence is that of Formimidoylglutamase from Legionella pneumophila subsp. pneumophila (strain Philadelphia 1 / ATCC 33152 / DSM 7513).